A 625-amino-acid chain; its full sequence is DNA mismatch repair protein MutL (625 aa).

This sequence belongs to the DNA mismatch repair MutL/HexB family.

This protein is involved in the repair of mismatches in DNA. It is required for dam-dependent methyl-directed DNA mismatch repair. May act as a 'molecular matchmaker', a protein that promotes the formation of a stable complex between two or more DNA-binding proteins in an ATP-dependent manner without itself being part of a final effector complex. The chain is DNA mismatch repair protein MutL from Bacteroides fragilis (strain YCH46).